The following is a 56-amino-acid chain: U-limacoditoxin(3)-Dv21 (56 aa).

An N-terminal signal peptide occupies residues 1–19; sequence MKKVIMLLLIFALFAYALS. 3 disulfide bridges follow: cysteine 26-cysteine 41, cysteine 33-cysteine 46, and cysteine 40-cysteine 53.

It belongs to the limacoditoxin-22 family. Expressed by the venom secretory cell of the spine. The spine is a cuticular structure containing a single large nucleated venom-secreting cell at its base. It is an independent unit capable of producing, storing and injecting venom. On the back of D.vulnerans caterpillars, spines are grouped together by 50 to 100 to form scoli, of which there are eight in D.vulnerans.

Its subcellular location is the secreted. Functionally, probable toxin. Shows a moderate antiparasitic activity against the major pathogenic nematode of ruminants (H.contortus, IC(50)=22.1 uM). Does not show insecticidal activities. Does not induce increase in intracellular calcium in mouse DRG neurons, suggesting that it does not induce pain. This chain is U-limacoditoxin(3)-Dv21, found in Doratifera vulnerans (Mottled cup moth).